The primary structure comprises 211 residues: Protein-L-isoaspartate O-methyltransferase (211 aa).

The active site involves Ser62.

Belongs to the methyltransferase superfamily. L-isoaspartyl/D-aspartyl protein methyltransferase family.

It localises to the cytoplasm. It catalyses the reaction [protein]-L-isoaspartate + S-adenosyl-L-methionine = [protein]-L-isoaspartate alpha-methyl ester + S-adenosyl-L-homocysteine. Its function is as follows. Catalyzes the methyl esterification of L-isoaspartyl residues in peptides and proteins that result from spontaneous decomposition of normal L-aspartyl and L-asparaginyl residues. It plays a role in the repair and/or degradation of damaged proteins. The protein is Protein-L-isoaspartate O-methyltransferase of Shewanella amazonensis (strain ATCC BAA-1098 / SB2B).